The chain runs to 201 residues: Receptor expression-enhancing protein 1 (201 aa).

Transmembrane regions (helical) follow at residues 1 to 21 (MVSWIISRLVVLIFGTLYPAY) and 35 to 55 (YVKWMMYWIIFALFTTAETFT). A Phosphoserine modification is found at serine 152. A disordered region spans residues 158-201 (TIRGDGAPAPSGPPPPGTGRSSGKHSQPKMSRSASESAGSSGTA). The span at 188–201 (SRSASESAGSSGTA) shows a compositional bias: low complexity.

It belongs to the DP1 family. In terms of assembly, interacts with OLFR992. Interacts with SPAST and ATL1. Interacts (via C-terminus) with microtubules. Interacts with ZFYVE27. Detected in olfactory sensory neurons of the olfactory epithelium, and in total brain.

It localises to the membrane. The protein localises to the mitochondrion membrane. Its subcellular location is the endoplasmic reticulum. In terms of biological role, required for endoplasmic reticulum (ER) network formation, shaping and remodeling; it links ER tubules to the cytoskeleton. May also enhance the cell surface expression of odorant receptors. In Mus musculus (Mouse), this protein is Receptor expression-enhancing protein 1 (Reep1).